A 142-amino-acid polypeptide reads, in one-letter code: AP-2 complex subunit sigma (142 aa).

It belongs to the adaptor complexes small subunit family. In terms of assembly, adaptor protein complex 2 (AP-2) is a heterotetramer composed of two large adaptins (alpha-type and beta-type subunits), a medium adaptin (mu-type subunit AP50) and a small adaptin (sigma-type subunit AP17).

The protein localises to the cell membrane. Its subcellular location is the membrane. It is found in the coated pit. Its function is as follows. Component of the adaptor complexes which link clathrin to receptors in coated vesicles. Clathrin-associated protein complexes are believed to interact with the cytoplasmic tails of membrane proteins, leading to their selection and concentration. The sequence is that of AP-2 complex subunit sigma (ap2s1) from Dictyostelium discoideum (Social amoeba).